A 1218-amino-acid polypeptide reads, in one-letter code: Protein dispatched (1218 aa).

The chain crosses the membrane as a helical span at residues 21–41 (YLVVVSIAVYCVACIIVALVL). The disordered stretch occupies residues 99-135 (VETKLHPNHRRRKNKHKNRNKNKRRKEQNQSSHEHHD). Positions 104 to 124 (HPNHRRRKNKHKNRNKNKRRK) are enriched in basic residues. Residues asparagine 127, asparagine 176, asparagine 197, asparagine 264, asparagine 319, and asparagine 388 are each glycosylated (N-linked (GlcNAc...) asparagine). Positions 430–624 (AMDLGLENEL…ITWLPASVSI (195 aa)) constitute an SSD domain. The next 6 membrane-spanning stretches (helical) occupy residues 443–463 (LLLT…ASVW), 473–493 (LMSC…YAIV), 504–524 (LLAV…FLKI), 570–590 (AAAS…ASYS), 598–618 (CFGI…ITWL), and 670–690 (AYLW…IVFW). N-linked (GlcNAc...) asparagine glycosylation is found at asparagine 767, asparagine 883, and asparagine 891. Transmembrane regions (helical) follow at residues 975–995 (LAVL…VLTV), 996–1016 (SLSI…LNIL), 1019–1039 (IAVS…GIHY), 1058–1078 (IIGP…IMMA), and 1087–1107 (IGVF…FFLM).

It belongs to the dispatched family.

It is found in the membrane. In terms of biological role, segment polarity protein which functions in hedgehog (Hh) signaling. Regulates the trafficking and the release of cholesterol-modified hedgehog protein from cells of the posterior compartment (P cells) and is hence required for the effective production of the Hh signal. This Drosophila melanogaster (Fruit fly) protein is Protein dispatched (disp).